The chain runs to 79 residues: Delta-hormotoxin-Cpt1a (79 aa).

Positions Met-1–Ser-20 are cleaved as a signal peptide. Positions Arg-21–Ala-31 are excised as a propeptide. 3 disulfide bridges follow: Cys-36-Cys-75, Cys-38-Cys-66, and Cys-56-Cys-76.

Belongs to the sea anemone sodium channel inhibitory toxin family.

Its subcellular location is the secreted. It is found in the nematocyst. Its function is as follows. In neuromuscular preparation of crustaceans, the toxin increased neurotransmitter release, causing repetitive firing of the axons. May affect sodium channels (Nav). This is Delta-hormotoxin-Cpt1a from Calliactis parasitica (Sea anemone).